Here is a 193-residue protein sequence, read N- to C-terminus: ATP synthase subunit b (193 aa).

The chain crosses the membrane as a helical span at residues 35–55; sequence IPMMLATFIAFVIVFLLLFFF.

It belongs to the ATPase B chain family. F-type ATPases have 2 components, F(1) - the catalytic core - and F(0) - the membrane proton channel. F(1) has five subunits: alpha(3), beta(3), gamma(1), delta(1), epsilon(1). F(0) has three main subunits: a(1), b(2) and c(10-14). The alpha and beta chains form an alternating ring which encloses part of the gamma chain. F(1) is attached to F(0) by a central stalk formed by the gamma and epsilon chains, while a peripheral stalk is formed by the delta and b chains.

The protein resides in the cell membrane. F(1)F(0) ATP synthase produces ATP from ADP in the presence of a proton or sodium gradient. F-type ATPases consist of two structural domains, F(1) containing the extramembraneous catalytic core and F(0) containing the membrane proton channel, linked together by a central stalk and a peripheral stalk. During catalysis, ATP synthesis in the catalytic domain of F(1) is coupled via a rotary mechanism of the central stalk subunits to proton translocation. Functionally, component of the F(0) channel, it forms part of the peripheral stalk, linking F(1) to F(0). The chain is ATP synthase subunit b from Mycoplasmopsis synoviae (strain 53) (Mycoplasma synoviae).